The chain runs to 232 residues: Ribonuclease 3 (232 aa).

The RNase III domain occupies 5-134 (QTVLKNHFAI…FLGALLLDKD (130 aa)). Position 47 (E47) interacts with Mg(2+). D51 is a catalytic residue. Residues D120 and E123 each contribute to the Mg(2+) site. E123 is an active-site residue. In terms of domain architecture, DRBM spans 160–229 (DYKTHLQELL…AKNAVEKGLD (70 aa)).

It belongs to the ribonuclease III family. In terms of assembly, homodimer. The cofactor is Mg(2+).

It localises to the cytoplasm. The enzyme catalyses Endonucleolytic cleavage to 5'-phosphomonoester.. In terms of biological role, digests double-stranded RNA. Involved in the processing of primary rRNA transcript to yield the immediate precursors to the large and small rRNAs (23S and 16S). Processes some mRNAs, and tRNAs when they are encoded in the rRNA operon. Processes pre-crRNA and tracrRNA of type II CRISPR loci if present in the organism. The protein is Ribonuclease 3 of Streptococcus pneumoniae (strain P1031).